Reading from the N-terminus, the 291-residue chain is ATP synthase subunit b 2 (291 aa).

The helical transmembrane segment at 2–22 (LIDGFTVVAQIVNFLILVWLL) threads the bilayer.

It belongs to the ATPase B chain family. In terms of assembly, F-type ATPases have 2 components, F(1) - the catalytic core - and F(0) - the membrane proton channel. F(1) has five subunits: alpha(3), beta(3), gamma(1), delta(1), epsilon(1). F(0) has three main subunits: a(1), b(2) and c(10-14). The alpha and beta chains form an alternating ring which encloses part of the gamma chain. F(1) is attached to F(0) by a central stalk formed by the gamma and epsilon chains, while a peripheral stalk is formed by the delta and b chains.

It localises to the cell inner membrane. Its function is as follows. F(1)F(0) ATP synthase produces ATP from ADP in the presence of a proton or sodium gradient. F-type ATPases consist of two structural domains, F(1) containing the extramembraneous catalytic core and F(0) containing the membrane proton channel, linked together by a central stalk and a peripheral stalk. During catalysis, ATP synthesis in the catalytic domain of F(1) is coupled via a rotary mechanism of the central stalk subunits to proton translocation. Functionally, component of the F(0) channel, it forms part of the peripheral stalk, linking F(1) to F(0). This is ATP synthase subunit b 2 from Nitrosospira multiformis (strain ATCC 25196 / NCIMB 11849 / C 71).